Reading from the N-terminus, the 402-residue chain is 26S proteasome regulatory subunit 8 (402 aa).

186–193 (GPPGTGKT) is a binding site for ATP.

The protein belongs to the AAA ATPase family.

The protein localises to the cytoplasm. It is found in the nucleus. In terms of biological role, the 26S proteasome is involved in the ATP-dependent degradation of ubiquitinated proteins. The regulatory (or ATPase) complex confers ATP dependency and substrate specificity to the 26S complex. This Manduca sexta (Tobacco hawkmoth) protein is 26S proteasome regulatory subunit 8.